A 437-amino-acid chain; its full sequence is Ribosomal protein uS12 methylthiotransferase RimO (437 aa).

Residues 3-118 form the MTTase N-terminal domain; sequence KKFYITTLGC…AGKILREKFP (116 aa). Residues Cys-12, Cys-48, Cys-81, Cys-157, Cys-161, and Cys-164 each contribute to the [4Fe-4S] cluster site. In terms of domain architecture, Radical SAM core spans 143 to 370; sequence NYSKPYAYVK…RDSHLEILEE (228 aa). The region spanning 373–437 is the TRAM domain; sequence ESRIGRTYDA…YEYDMNGTWV (65 aa).

This sequence belongs to the methylthiotransferase family. RimO subfamily. The cofactor is [4Fe-4S] cluster.

It is found in the cytoplasm. It catalyses the reaction L-aspartate(89)-[ribosomal protein uS12]-hydrogen + (sulfur carrier)-SH + AH2 + 2 S-adenosyl-L-methionine = 3-methylsulfanyl-L-aspartate(89)-[ribosomal protein uS12]-hydrogen + (sulfur carrier)-H + 5'-deoxyadenosine + L-methionine + A + S-adenosyl-L-homocysteine + 2 H(+). Functionally, catalyzes the methylthiolation of an aspartic acid residue of ribosomal protein uS12. This is Ribosomal protein uS12 methylthiotransferase RimO from Leptospira interrogans serogroup Icterohaemorrhagiae serovar copenhageni (strain Fiocruz L1-130).